The chain runs to 264 residues: NAD kinase 1 (264 aa).

The active-site Proton acceptor is aspartate 45. Residues 45–46 (DG), glycine 46, 122–123 (NE), arginine 148, aspartate 150, serine 158, 161–166 (TAYNKS), and histidine 223 contribute to the NAD(+) site.

The protein belongs to the NAD kinase family. In terms of assembly, homotetramer. It depends on a divalent metal cation as a cofactor.

The protein resides in the cytoplasm. It catalyses the reaction NAD(+) + ATP = ADP + NADP(+) + H(+). Competitively inhibited by 5'-thioacetyladenosine (TAA) and di-(5'-thioadenosine) (DTA). Its function is as follows. Involved in the regulation of the intracellular balance of NAD and NADP, and is a key enzyme in the biosynthesis of NADP. Catalyzes specifically the phosphorylation on 2'-hydroxyl of the adenosine moiety of NAD to yield NADP. This is NAD kinase 1 from Listeria monocytogenes serovar 1/2a (strain ATCC BAA-679 / EGD-e).